Here is a 424-residue protein sequence, read N- to C-terminus: Cysteate synthase (424 aa).

Lysine 106 carries the post-translational modification N6-(pyridoxal phosphate)lysine. Pyridoxal 5'-phosphate contacts are provided by asparagine 132 and threonine 381.

It belongs to the threonine synthase family. Cysteate synthase subfamily. Homotrimer. Pyridoxal 5'-phosphate is required as a cofactor.

The catalysed reaction is O-phospho-L-serine + sulfite + H(+) = L-cysteate + phosphate. It functions in the pathway cofactor biosynthesis; coenzyme M biosynthesis. Specifically catalyzes the beta-elimination of phosphate from L-phosphoserine and the beta-addition of sulfite to the dehydroalanine intermediate to produce L-cysteate. In Methanoregula boonei (strain DSM 21154 / JCM 14090 / 6A8), this protein is Cysteate synthase.